The following is a 250-amino-acid chain: Ribonuclease PH (250 aa).

Phosphate contacts are provided by residues Arg86 and 124 to 126; that span reads GTR.

This sequence belongs to the RNase PH family. In terms of assembly, homohexameric ring arranged as a trimer of dimers.

It carries out the reaction tRNA(n+1) + phosphate = tRNA(n) + a ribonucleoside 5'-diphosphate. Phosphorolytic 3'-5' exoribonuclease that plays an important role in tRNA 3'-end maturation. Removes nucleotide residues following the 3'-CCA terminus of tRNAs; can also add nucleotides to the ends of RNA molecules by using nucleoside diphosphates as substrates, but this may not be physiologically important. Probably plays a role in initiation of 16S rRNA degradation (leading to ribosome degradation) during starvation. This is Ribonuclease PH from Exiguobacterium sibiricum (strain DSM 17290 / CCUG 55495 / CIP 109462 / JCM 13490 / 255-15).